The chain runs to 131 residues: Ribosome-binding factor A (131 aa).

Belongs to the RbfA family. As to quaternary structure, monomer. Binds 30S ribosomal subunits, but not 50S ribosomal subunits or 70S ribosomes.

The protein resides in the cytoplasm. Its function is as follows. One of several proteins that assist in the late maturation steps of the functional core of the 30S ribosomal subunit. Associates with free 30S ribosomal subunits (but not with 30S subunits that are part of 70S ribosomes or polysomes). Required for efficient processing of 16S rRNA. May interact with the 5'-terminal helix region of 16S rRNA. This is Ribosome-binding factor A from Ruegeria pomeroyi (strain ATCC 700808 / DSM 15171 / DSS-3) (Silicibacter pomeroyi).